Here is a 247-residue protein sequence, read N- to C-terminus: 2-dehydro-3-deoxy-phosphogluconate aldolase (247 aa).

The protein belongs to the DagF family.

The enzyme catalyses 2-dehydro-3-deoxy-6-phospho-D-gluconate = D-glyceraldehyde 3-phosphate + pyruvate. In terms of biological role, involved in the catabolism of D-glucosaminate. Catalyzes the conversion of keto-3-deoxygluconate 6-phosphate (KDGP) to yield pyruvate and glyceraldehyde-3-phosphate. This Salmonella typhimurium (strain 14028s / SGSC 2262) protein is 2-dehydro-3-deoxy-phosphogluconate aldolase.